The primary structure comprises 317 residues: Acetyl-coenzyme A carboxylase carboxyl transferase subunit alpha (317 aa).

The CoA carboxyltransferase C-terminal domain occupies 37–292 (RLEKKAEKLR…RICLKKHLDD (256 aa)).

The protein belongs to the AccA family. In terms of assembly, acetyl-CoA carboxylase is a heterohexamer composed of biotin carboxyl carrier protein (AccB), biotin carboxylase (AccC) and two subunits each of ACCase subunit alpha (AccA) and ACCase subunit beta (AccD).

The protein localises to the cytoplasm. It catalyses the reaction N(6)-carboxybiotinyl-L-lysyl-[protein] + acetyl-CoA = N(6)-biotinyl-L-lysyl-[protein] + malonyl-CoA. Its pathway is lipid metabolism; malonyl-CoA biosynthesis; malonyl-CoA from acetyl-CoA: step 1/1. Component of the acetyl coenzyme A carboxylase (ACC) complex. First, biotin carboxylase catalyzes the carboxylation of biotin on its carrier protein (BCCP) and then the CO(2) group is transferred by the carboxyltransferase to acetyl-CoA to form malonyl-CoA. The sequence is that of Acetyl-coenzyme A carboxylase carboxyl transferase subunit alpha from Syntrophotalea carbinolica (strain DSM 2380 / NBRC 103641 / GraBd1) (Pelobacter carbinolicus).